The sequence spans 782 residues: DNA repair and recombination protein RAD54-like (782 aa).

Over residues 1–20 the composition is skewed to polar residues; sequence MRRSLAPSQRGGQRLSSRND. The disordered stretch occupies residues 1-28; that stretch reads MRRSLAPSQRGGQRLSSRNDFTPPLLKK. The segment at 2–9 is required for chromatin remodeling, strand pairing activities and coupling of ATPase activity; that stretch reads RRSLAPSQ. Thr-22 is subject to Phosphothreonine. The region spanning 168 to 343 is the Helicase ATP-binding domain; that stretch reads EGKRGNFNGC…FSLVNFVNPE (176 aa). 181-188 contacts ATP; it reads DEMGLGKT. Positions 294–297 match the DEGH box motif; the sequence is DEGH. The 158-residue stretch at 501–658 folds into the Helicase C-terminal domain; that stretch reads LLDFMLAAIR…NNESAEKHFT (158 aa). A compositionally biased stretch (polar residues) spans 741–753; it reads SQKIEATPATETS. Residues 741–782 are disordered; the sequence is SQKIEATPATETSVEAKLEPERRKRPAMPLSDDSADEDFQGF. Positions 773–782 are enriched in acidic residues; that stretch reads DSADEDFQGF.

The protein belongs to the SNF2/RAD54 helicase family. Interacts (via N-terminus) with spn-A/Rad51.

The protein localises to the nucleus. Its function is as follows. Involved in mitotic DNA repair and meiotic recombination. Functions in the recombinational DNA repair pathway. Essential for interhomolog gene conversion (GC), but may have a less important role in intersister GC than spn-A/Rad51. In the presence of DNA, spn-A/Rad51 enhances the ATPase activity of okr/Rad54. The sequence is that of DNA repair and recombination protein RAD54-like from Drosophila persimilis (Fruit fly).